The primary structure comprises 697 residues: SPX domain-containing membrane protein OsI_08463 (697 aa).

Positions 2-145 constitute an SPX domain; the sequence is VNFGKRLMAD…GYKFTDYYVS (144 aa). 11 consecutive transmembrane segments (helical) span residues 247-267, 278-298, 315-335, 338-356, 375-395, 411-431, 513-533, 544-564, 576-596, 604-624, and 670-690; these read FMSL…TYII, LGAA…AQVF, LVFS…AYDV, LTVL…ARAV, AGFV…AGLL, LPGW…WISF, LLIY…SSVV, TVAM…VIVG, ILVA…RFTS, VSSA…NLSL, and LLNV…VATF.

The protein belongs to the major facilitator superfamily.

It localises to the membrane. The protein is SPX domain-containing membrane protein OsI_08463 of Oryza sativa subsp. indica (Rice).